We begin with the raw amino-acid sequence, 1156 residues long: Reverse gyrase 1 (1156 aa).

The RG N-terminal-type zinc finger occupies 1 to 38 (MLKVYYTFGCPNCGGPIDDEHLLAGVPCSKCLPGRVEN). 4 residues coordinate Zn(2+): Cys10, Cys13, Cys28, and Cys31. Residues Gln86 and 103 to 110 (APTGLGKT) each bind ATP. Residues 90-277 (IKRLAKSESF…ALRTLIGFEP (188 aa)) form the Helicase ATP-binding domain. The DEAD box signature appears at 184–187 (DDSD). Residues 570–1156 (INIKTILLIV…VNSLKLDTNV (587 aa)) are topoisomerase I. The Toprim domain occupies 574 to 736 (TILLIVESPT…NIYRIKYHEI (163 aa)). A Mg(2+)-binding site is contributed by Glu580. The RG C-terminal-type zinc finger occupies 655-682 (IYKCYNCGKTFTIKSNTCPYCGSVFISS). Cys658, Cys661, Cys672, and Cys675 together coordinate Zn(2+). Asp705 is a Mg(2+) binding site. The 392-residue stretch at 752–1143 (NMNLVKSQIV…DLHKEITQIS (392 aa)) folds into the Topo IA-type catalytic domain. Tyr895 serves as the catalytic O-(5'-phospho-DNA)-tyrosine intermediate.

This sequence in the N-terminal section; belongs to the DEAD box helicase family. DDVD subfamily. In the C-terminal section; belongs to the type IA topoisomerase family. Monomer. Zn(2+) is required as a cofactor. Mg(2+) serves as cofactor.

It localises to the cytoplasm. It catalyses the reaction ATP + H2O = ADP + phosphate + H(+). Its function is as follows. Modifies the topological state of DNA by introducing positive supercoils in an ATP-dependent process, increasing the linking number in steps of +1. Binds to single-stranded DNA, transiently cleaves and then rejoins the ends, introducing a positive supercoil in the process. The scissile phosphodiester is attacked by the catalytic tyrosine of the enzyme, resulting in the formation of a DNA-(5'-phosphotyrosyl)-enzyme intermediate. Probably involved in rewinding DNA strands in regions of the chromosome that have opened up to allow replication, transcription, DNA repair and/or for DNA protection. This is Reverse gyrase 1 from Sulfurisphaera tokodaii (strain DSM 16993 / JCM 10545 / NBRC 100140 / 7) (Sulfolobus tokodaii).